A 330-amino-acid polypeptide reads, in one-letter code: tRNA pseudouridine synthase B (330 aa).

Asp42 serves as the catalytic Nucleophile.

Belongs to the pseudouridine synthase TruB family. Type 1 subfamily.

It carries out the reaction uridine(55) in tRNA = pseudouridine(55) in tRNA. Its function is as follows. Responsible for synthesis of pseudouridine from uracil-55 in the psi GC loop of transfer RNAs. In Lactococcus lactis subsp. cremoris (strain MG1363), this protein is tRNA pseudouridine synthase B.